A 105-amino-acid polypeptide reads, in one-letter code: Thioredoxin (105 aa).

The Thioredoxin domain maps to 2 to 105; that stretch reads VKLIESKEAF…KLEASITEYA (104 aa). An N6-acetyllysine modification is found at Lys3. Lys8 carries the N6-succinyllysine modification. Active-site nucleophile residues include Cys32 and Cys35. A disulfide bridge connects residues Cys32 and Cys35. Residue Lys39 is modified to N6-acetyllysine. Cys62 and Cys69 each carry S-nitrosocysteine. At Cys73 the chain carries S-nitrosocysteine; alternate. Lys94 carries the N6-acetyllysine; alternate modification. N6-succinyllysine; alternate is present on Lys94.

Belongs to the thioredoxin family. Homodimer; disulfide-linked. Interacts with TXNIP through the redox-active site. Interacts with MAP3K5 and CASP3. Interacts with APEX1; the interaction stimulates the FOS/JUN AP-1 DNA-binding activity in a redox-dependent manner. In the fully reduced protein, both Cys-69 and Cys-73 are nitrosylated in response to nitric oxide (NO). When two disulfide bonds are present in the protein, only Cys-73 is nitrosylated. Cys-73 can serve as donor for nitrosylation of target proteins.

Its subcellular location is the nucleus. It localises to the cytoplasm. The protein localises to the secreted. In terms of biological role, participates in various redox reactions through the reversible oxidation of its active center dithiol to a disulfide and catalyzes dithiol-disulfide exchange reactions. Plays a role in the reversible S-nitrosylation of cysteine residues in target proteins, and thereby contributes to the response to intracellular nitric oxide. Nitrosylates the active site Cys of CASP3 in response to nitric oxide (NO), and thereby inhibits caspase-3 activity. Induces the FOS/JUN AP-1 DNA binding activity in ionizing radiation (IR) cells through its oxidation/reduction status and stimulates AP-1 transcriptional activity. Its function is as follows. ADF augments the expression of the interleukin-2 receptor TAC (IL2R/P55). This Mus musculus (Mouse) protein is Thioredoxin (Txn).